The following is a 490-amino-acid chain: Bifunctional IPC transferase and DIPP synthase (490 aa).

The mobA-like NTP transferase stretch occupies residues 72–290; that stretch reads LMKAVILAAG…RANRALVSAA (219 aa). CTP-binding positions include 78 to 80, Lys-91, Asp-144, and Glu-180; that span reads LAA. Glu-180 contacts Mg(2+). A CDP-alcohol phosphatidyltransferases region spans residues 291-490; it reads VKGSGDGFIS…VTLLAVLVSK (200 aa). Transmembrane regions (helical) follow at residues 329–349, 389–409, 447–467, and 468–488; these read FLVGAFSALASFFSIPLAGLL, FLAIIALLYPKTATVAMFAIF, IFLIMIFCLLSAISLQWIFWM, and FLFVAAISLTRVVVTLLAVLV.

The protein in the N-terminal section; belongs to the MobA family. This sequence in the C-terminal section; belongs to the CDP-alcohol phosphatidyltransferase class-I family. As to quaternary structure, forms a mixture of monomers and dimers in solution, with prevalence of the monomeric form. It depends on Mg(2+) as a cofactor.

It localises to the membrane. It carries out the reaction 1D-myo-inositol 3-phosphate + CTP + H(+) = CDP-1L-myo-inositol + diphosphate. It catalyses the reaction CDP-1L-myo-inositol + 1D-myo-inositol 3-phosphate = bis(1L-myo-inositol) 3,1'-phosphate 1-phosphate + CMP + H(+). Involved in biosynthesis of di-myo-inositol phosphate (DIP), a widespread organic solute in microorganisms adapted to hot environments. Catalyzes the condensation of CTP and L-myo-inositol-1-phosphate into CDP-L-myo-inositol, as well as the biosynthesis of di-myo-inositol-1,3'-phosphate-1'-phosphate (DIPP) from CDP-L-myo-inositol and L-myo-inositol-1-phosphate. The cytidylyltransferase is absolutely specific for CTP and L-myo-inositol-1-P. The DIPP synthase uses only L-myoinositol-1-phosphate as an alcohol acceptor, but CDP-glycerol, as well as CDP-L-myo-inositol and CDP-D-myoinositol, are recognized as alcohol donors. In Archaeoglobus fulgidus (strain ATCC 49558 / DSM 4304 / JCM 9628 / NBRC 100126 / VC-16), this protein is Bifunctional IPC transferase and DIPP synthase.